The chain runs to 110 residues: U1-lycotoxin-Ls1aa (110 aa).

Residues 1–20 form the signal peptide; the sequence is MKFVLLFGVLLVTLFSYSSA. Residues 21–44 constitute a propeptide that is removed on maturation; the sequence is EMLDDFDQADEDELLSLIEKEEAR. Cystine bridges form between C47/C62, C54/C71, C61/C89, and C73/C87.

It belongs to the neurotoxin 19 (CSTX) family. 03 subfamily. Expressed by the venom gland.

The protein localises to the secreted. This chain is U1-lycotoxin-Ls1aa, found in Lycosa singoriensis (Wolf spider).